Here is a 750-residue protein sequence, read N- to C-terminus: Photosystem I P700 chlorophyll a apoprotein A1 (750 aa).

Transmembrane regions (helical) follow at residues 70 to 93 (VFSA…FHGA), 156 to 179 (LYCT…FHYH), 195 to 219 (LNHH…HVSL), 291 to 309 (IAHH…GHMY), 346 to 369 (WHAQ…HHMY), 385 to 411 (LSLF…IFMV), 433 to 455 (AIIS…LYIH), and 531 to 549 (FLVH…LILL). Positions 573 and 582 each coordinate [4Fe-4S] cluster. Transmembrane regions (helical) follow at residues 589-610 (HVFL…HFSW) and 664-686 (LSAY…MFLF). Chlorophyll a' is bound at residue histidine 675. Methionine 683 and tyrosine 691 together coordinate chlorophyll a. Position 692 (tryptophan 692) interacts with phylloquinone. Residues 724-744 (AVGVTHYLLGGIATTWAFFLA) form a helical membrane-spanning segment.

This sequence belongs to the PsaA/PsaB family. As to quaternary structure, the PsaA/B heterodimer binds the P700 chlorophyll special pair and subsequent electron acceptors. PSI consists of a core antenna complex that captures photons, and an electron transfer chain that converts photonic excitation into a charge separation. The eukaryotic PSI reaction center is composed of at least 11 subunits. The cofactor is P700 is a chlorophyll a/chlorophyll a' dimer, A0 is one or more chlorophyll a, A1 is one or both phylloquinones and FX is a shared 4Fe-4S iron-sulfur center..

The protein resides in the plastid. Its subcellular location is the chloroplast thylakoid membrane. The catalysed reaction is reduced [plastocyanin] + hnu + oxidized [2Fe-2S]-[ferredoxin] = oxidized [plastocyanin] + reduced [2Fe-2S]-[ferredoxin]. In terms of biological role, psaA and PsaB bind P700, the primary electron donor of photosystem I (PSI), as well as the electron acceptors A0, A1 and FX. PSI is a plastocyanin-ferredoxin oxidoreductase, converting photonic excitation into a charge separation, which transfers an electron from the donor P700 chlorophyll pair to the spectroscopically characterized acceptors A0, A1, FX, FA and FB in turn. Oxidized P700 is reduced on the lumenal side of the thylakoid membrane by plastocyanin. The polypeptide is Photosystem I P700 chlorophyll a apoprotein A1 (Atropa belladonna (Belladonna)).